A 92-amino-acid chain; its full sequence is Putative membrane protein insertion efficiency factor (92 aa).

The protein belongs to the UPF0161 family.

The protein resides in the cell inner membrane. In terms of biological role, could be involved in insertion of integral membrane proteins into the membrane. The chain is Putative membrane protein insertion efficiency factor from Synechococcus sp. (strain CC9605).